Here is a 658-residue protein sequence, read N- to C-terminus: Protein CFAP20DC (658 aa).

Disordered regions lie at residues 312 to 522 and 589 to 634; these read QQGE…EEEY and PVNQ…LDSS. The span at 319-328 shows a compositional bias: polar residues; that stretch reads SHPVKQTTPL. A compositionally biased stretch (basic and acidic residues) spans 339–349; it reads PPRDPSADKGS. Low complexity-rich tracts occupy residues 351–363 and 417–434; these read RRGLGLRSSSGSR and SSGPPSGAAGSSSSLLLD. The span at 494–506 shows a compositional bias: basic and acidic residues; sequence DPKEDSRVTKGDT. Positions 507–521 are enriched in acidic residues; that stretch reads ELEDDFYGSDSSEEE. Positions 625–634 are enriched in polar residues; the sequence is QPLEQSLDSS.

This Rattus norvegicus (Rat) protein is Protein CFAP20DC.